The sequence spans 199 residues: DnaJ homolog subfamily C member 5B (199 aa).

Phosphoserine occurs at positions 14 and 16. The region spanning 19–84 (ALYEILGLHK…SKRNIYDKYG (66 aa)) is the J domain.

In terms of assembly, interacts with the chaperone complex consisting of HSC70 and SGTA. Palmitoylated.

The protein localises to the membrane. The protein is DnaJ homolog subfamily C member 5B (DNAJC5B) of Bos taurus (Bovine).